Consider the following 480-residue polypeptide: Serralysin (480 aa).

H181 contributes to the Zn(2+) binding site. The active site involves E182. Zn(2+)-binding residues include H185 and H191. R260, D263, D292, G294, G295, D297, T334, and E336 together coordinate Ca(2+). 2 Hemolysin-type calcium-binding repeats span residues 339–356 and 357–374; these read IGGSGNDVLIGNDAANTL and KGGAGDDIIYGGLGADNL.

It belongs to the peptidase M10B family. It depends on Zn(2+) as a cofactor. Ca(2+) serves as cofactor.

Its subcellular location is the secreted. It catalyses the reaction Preferential cleavage of bonds with hydrophobic residues in P1'.. This Photorhabdus laumondii subsp. laumondii (strain DSM 15139 / CIP 105565 / TT01) (Photorhabdus luminescens subsp. laumondii) protein is Serralysin (prtA).